Here is a 180-residue protein sequence, read N- to C-terminus: MALRPRFWKCLSVCRKLECGFAALSTSSVPAVQPDVESKENEAVAPEFTNRNPRNLELLGVARKERGWATVWPNREFWHRLRVVKTQHHVEAFVEHLNGQVVVSASTREWAIKKHLYSTRNVVACESIGRVLAQRCLEAGINFMVYQPTPWEASSDSIKRLQNAMTESGVMLREPRRIYE.

Belongs to the universal ribosomal protein uL18 family. In terms of assembly, component of the mitochondrial ribosome large subunit (39S) which comprises a 16S rRNA and about 50 distinct proteins.

It localises to the mitochondrion. Its function is as follows. Together with thiosulfate sulfurtransferase (TST), acts as a mitochondrial import factor for the cytosolic 5S rRNA. The precursor form shows RNA chaperone activity; is able to fold the 5S rRNA into an import-competent conformation that is recognized by rhodanese (TST). Both the cytoplasmic and mitochondrial forms are able to bind to the helix IV-loop D in the gamma domain of the 5S rRNA. This Mus musculus (Mouse) protein is Large ribosomal subunit protein uL18m (Mrpl18).